Consider the following 209-residue polypeptide: Uracil phosphoribosyltransferase (209 aa).

5-phospho-alpha-D-ribose 1-diphosphate-binding positions include R79, R104, and 131–139; that span reads DPMLATGNS. Residues I194 and 199–201 contribute to the uracil site; that span reads GDA. D200 provides a ligand contact to 5-phospho-alpha-D-ribose 1-diphosphate.

This sequence belongs to the UPRTase family. The cofactor is Mg(2+).

It catalyses the reaction UMP + diphosphate = 5-phospho-alpha-D-ribose 1-diphosphate + uracil. Its pathway is pyrimidine metabolism; UMP biosynthesis via salvage pathway; UMP from uracil: step 1/1. Allosterically activated by GTP. Catalyzes the conversion of uracil and 5-phospho-alpha-D-ribose 1-diphosphate (PRPP) to UMP and diphosphate. The protein is Uracil phosphoribosyltransferase of Rhizobium leguminosarum bv. trifolii (strain WSM2304).